Reading from the N-terminus, the 401-residue chain is Serine--glyoxylate aminotransferase (401 aa).

Met-1 carries the N-acetylmethionine modification. Pyridoxal 5'-phosphate contacts are provided by residues 68–70, Thr-148, and 200–201; these read TGT and QK. 3-hydroxypyruvate is bound at residue Lys-201. N6-(pyridoxal phosphate)lysine is present on Lys-201. A Phosphoserine modification is found at Ser-204. A 3-hydroxypyruvate-binding site is contributed by Arg-347. The short motif at 399-401 is the Microbody targeting signal element; that stretch reads SRI.

It belongs to the class-V pyridoxal-phosphate-dependent aminotransferase family. Forms homodimers. Interacts with RABGAP22. Pyridoxal 5'-phosphate is required as a cofactor. In terms of tissue distribution, widely expressed. Preferentially expressed in green, leafy tissues, root cortex and epidermis, developing siliques and dry seeds.

The protein resides in the peroxisome. The catalysed reaction is glyoxylate + L-serine = 3-hydroxypyruvate + glycine. It catalyses the reaction glyoxylate + L-alanine = glycine + pyruvate. It carries out the reaction L-serine + pyruvate = 3-hydroxypyruvate + L-alanine. The enzyme catalyses 3-hydroxypyruvate + L-asparagine = 2-oxosuccinamate + L-serine. The catalysed reaction is L-asparagine + glyoxylate = 2-oxosuccinamate + glycine. It catalyses the reaction L-asparagine + pyruvate = 2-oxosuccinamate + L-alanine. With respect to regulation, inhibited by aminooxyacetate and beta-chloro-L-alanine, but not by p-hydroxymercuribenzoate. In terms of biological role, photorespiratory enzyme that catalyzes transamination reactions with multiple substrates, including asparagine. Functions exclusively as a catabolic enzyme in Asn metabolism. Involved in root development during seedling establishment after seed germination by regulating serine homeostasis and acetate conversion. The chain is Serine--glyoxylate aminotransferase from Arabidopsis thaliana (Mouse-ear cress).